Here is a 178-residue protein sequence, read N- to C-terminus: Leukemia NUP98 fusion partner 1 (178 aa).

Disordered stretches follow at residues E28–V55, S89–I108, and I147–E178. Basic residues predominate over residues R34 to T47. Over residues I147 to A167 the composition is skewed to basic and acidic residues.

The sequence is that of Leukemia NUP98 fusion partner 1 (LNP1) from Homo sapiens (Human).